Here is a 568-residue protein sequence, read N- to C-terminus: Phosphoprotein (568 aa).

The disordered stretch occupies residues Met-1–Glu-23. Residues Ile-7–Gly-20 show a composition bias toward basic and acidic residues. Positions Asp-33–Thr-41 are N0 binding. Positions Ile-54–Gly-317 are disordered. Basic and acidic residues-rich tracts occupy residues Ala-99–Asn-110, Gly-150–Asp-168, and Glu-175–Asn-193. A phosphoserine; by host mark is found at Ser-249, Ser-257, and Ser-260. The tract at residues Phe-344–Ser-411 is multimerization. Residues Tyr-364–His-429 adopt a coiled-coil conformation. Residues Glu-412–Thr-445 are l protein binding. The interval Asp-433–Thr-462 is disordered. Phosphoserine; by host occurs at positions 447 and 449. Residues Lys-453–Thr-462 show a composition bias toward basic and acidic residues. The segment at Asp-479–Asn-568 is interaction with the nucleocapsid (N-RNA).

Belongs to the respirovirus P protein family. In terms of assembly, homotetramer. Interacts (via multimerization domain) with polymerase L; this interaction forms the polymerase complex. Interacts (via N-terminus) with N0; this interaction allows P to chaperon N0 before encapsidation and form the N-P complex. Interacts (via C-terminus) with N-RNA template; this interaction positions the polymerase on the template. In terms of processing, phosphorylated by PKC/PRKCZ, and other unknown kinases. Phosphorylation is necessary for viral transcription and replication. The N-terminus contains the majority of phosphorylated sites. Ser-249 is the major site of phosphorylation, but is not necessary for most functions.

The protein localises to the host cytoplasm. Functionally, essential cofactor of the RNA polymerase L that plays a central role in the transcription and replication by forming the polymerase complex with RNA polymerase L and recruiting L to the genomic N-RNA template for RNA synthesis. Also plays a central role in the encapsidation of nascent RNA chains by forming the encapsidation complex with the nucleocapsid protein N (N-P complex). Acts as a chaperone for newly synthesized free N protein, so-called N0, allowing encapsidation of nascent RNA chains during replication. The nucleoprotein protein N prevents excessive phosphorylation of P, which leads to down-regulation of viral transcription/ replication. Participates, together with N, in the formation of viral factories (viroplasms), which are large inclusions in the host cytoplasm where replication takes place. Recruits host PI4KB and remodel the host endoplasmic reticulum membrane to form viral replication factories. The protein is Phosphoprotein (P/V/C) of Sendai virus (strain Ohita) (SeV).